Here is a 1163-residue protein sequence, read N- to C-terminus: E3 ubiquitin-protein ligase TRIM33 (1163 aa).

Residues 1 to 119 (MEVEASGTED…ASTSSSSSTP (119 aa)) are disordered. A compositionally biased stretch (basic and acidic residues) spans 27–38 (TETKEAADEAKS). The segment covering 45–54 (TPTTSSDSSS) has biased composition (low complexity). A compositionally biased stretch (pro residues) spans 72–87 (DPPPPPPPPPPPPPST). Over residues 88–99 (PADSTAAAASPA) the composition is skewed to low complexity. Residues 129–188 (CAVCKQSLQNRDCEPKLLPCLHSFCLKCIPQPDRKITMPVQGPHGQDTRIVNVMRCTVCH) form an RING-type zinc finger. The B box-type 1; atypical zinc finger occupies 215 to 268 (NSTQVCTSCEDNASAIGFCVECGEWLCKTCIEAHQRVKFTKDHKIRKKEEVSPE). Zn(2+) contacts are provided by cysteine 220, cysteine 223, cysteine 244, histidine 257, cysteine 280, histidine 283, cysteine 303, and histidine 308. The segment at 275 to 316 (QRPVFCPVHKQEALKLFCETCDTLTCRDCQLLEHKEHRYQFL) adopts a B box-type 2 zinc-finger fold. The stretch at 345–369 (ASEVQKRLKEVAETHKKVEHEIKIA) forms a coiled coil. Positions 524-533 (MQQAAIAQKH) are enriched in low complexity. Disordered regions lie at residues 524 to 555 (MQQAAIAQKHQQQHQHHQQQQHQHQHQQQQQQ), 575 to 599 (QIQQQMRIASQMSQHPRQGAPQMIQ), 656 to 706 (LQRQ…VITP), 753 to 848 (TVGP…PLPI), and 867 to 918 (NVKS…KEDD). The span at 534–548 (QQQHQHHQQQQHQHQ) shows a compositional bias: basic residues. The segment covering 580-590 (MRIASQMSQHP) has biased composition (polar residues). 2 stretches are compositionally biased toward low complexity: residues 678 to 691 (SAANPTSPTSASMA) and 753 to 797 (TVGP…SGTT). Over residues 821 to 830 (KTERTKDGRR) the composition is skewed to basic and acidic residues. The span at 870-889 (SEPQSDNLSSCTNPNSRATL) shows a compositional bias: polar residues. The PHD-type zinc-finger motif lies at 921–968 (EDWCAVCQNGGELLCCDHCPKVFHITCHIPTLKSSPSGDWMCTFCRNL). The region spanning 991–1114 (AMSPEEQRRC…LYFEERLLEI (124 aa)) is the Bromo domain. The disordered stretch occupies residues 1128 to 1147 (TQIEAEKEDSDDSDDDIIQP). Residues 1133 to 1144 (EKEDSDDSDDDI) are compositionally biased toward acidic residues.

The protein resides in the nucleus. The catalysed reaction is S-ubiquitinyl-[E2 ubiquitin-conjugating enzyme]-L-cysteine + [acceptor protein]-L-lysine = [E2 ubiquitin-conjugating enzyme]-L-cysteine + N(6)-ubiquitinyl-[acceptor protein]-L-lysine.. It participates in protein modification; protein ubiquitination. In terms of biological role, may act as an E3 ubiquitin-protein ligase and a transcriptional repressor. Involved in the regulation of embryonic and adult hematopoiesis. Required for normal development and survival of both committed erythroid progenitor cells and posterior mesenchymal cells. The protein is E3 ubiquitin-protein ligase TRIM33 (trim33) of Danio rerio (Zebrafish).